The chain runs to 189 residues: uncharacterized protein (189 aa).

The first 23 residues, 1-23 (MIKTTPHKIVILMGILLSPSVFA), serve as a signal peptide directing secretion. The segment at 104–125 (SSPKLIIPQSGDSSSTTSNIGM) is disordered. Positions 113 to 123 (SGDSSSTTSNI) are enriched in polar residues.

This sequence belongs to the fimbrial protein family.

It localises to the fimbrium. Its function is as follows. Part of the yadCKLM-htrE-yadVN fimbrial operon. Could contribute to adhesion to various surfaces in specific environmental niches. This is an uncharacterized protein from Escherichia coli (strain K12).